The chain runs to 113 residues: Large ribosomal subunit protein uL22 (113 aa).

Belongs to the universal ribosomal protein uL22 family. Part of the 50S ribosomal subunit.

Its function is as follows. This protein binds specifically to 23S rRNA; its binding is stimulated by other ribosomal proteins, e.g. L4, L17, and L20. It is important during the early stages of 50S assembly. It makes multiple contacts with different domains of the 23S rRNA in the assembled 50S subunit and ribosome. The globular domain of the protein is located near the polypeptide exit tunnel on the outside of the subunit, while an extended beta-hairpin is found that lines the wall of the exit tunnel in the center of the 70S ribosome. The sequence is that of Large ribosomal subunit protein uL22 from Bacillus pumilus (strain SAFR-032).